The following is a 646-amino-acid chain: Threonine--tRNA ligase (646 aa).

Residues 1–61 (MIKITFPDGS…NEDASVVLYK (61 aa)) enclose the TGS domain. A catalytic region spans residues 242 to 541 (DHRKIGKEMQ…LIEHTAGKFP (300 aa)). Positions 337, 388, and 518 each coordinate Zn(2+).

It belongs to the class-II aminoacyl-tRNA synthetase family. Homodimer. Zn(2+) serves as cofactor.

It localises to the cytoplasm. The enzyme catalyses tRNA(Thr) + L-threonine + ATP = L-threonyl-tRNA(Thr) + AMP + diphosphate + H(+). Catalyzes the attachment of threonine to tRNA(Thr) in a two-step reaction: L-threonine is first activated by ATP to form Thr-AMP and then transferred to the acceptor end of tRNA(Thr). Also edits incorrectly charged L-seryl-tRNA(Thr). This chain is Threonine--tRNA ligase, found in Bacteroides fragilis (strain YCH46).